A 424-amino-acid polypeptide reads, in one-letter code: Serine--tRNA ligase (424 aa).

L-serine is bound at residue 231 to 233; that stretch reads TAE. An ATP-binding site is contributed by 261-263; that stretch reads RSE. E284 contributes to the L-serine binding site. Residue 348–351 coordinates ATP; it reads ETSS. Residue S383 coordinates L-serine.

The protein belongs to the class-II aminoacyl-tRNA synthetase family. Type-1 seryl-tRNA synthetase subfamily. As to quaternary structure, homodimer. The tRNA molecule binds across the dimer.

It localises to the cytoplasm. It carries out the reaction tRNA(Ser) + L-serine + ATP = L-seryl-tRNA(Ser) + AMP + diphosphate + H(+). The enzyme catalyses tRNA(Sec) + L-serine + ATP = L-seryl-tRNA(Sec) + AMP + diphosphate + H(+). Its pathway is aminoacyl-tRNA biosynthesis; selenocysteinyl-tRNA(Sec) biosynthesis; L-seryl-tRNA(Sec) from L-serine and tRNA(Sec): step 1/1. Functionally, catalyzes the attachment of serine to tRNA(Ser). Is also able to aminoacylate tRNA(Sec) with serine, to form the misacylated tRNA L-seryl-tRNA(Sec), which will be further converted into selenocysteinyl-tRNA(Sec). This Metamycoplasma arthritidis (strain 158L3-1) (Mycoplasma arthritidis) protein is Serine--tRNA ligase.